Reading from the N-terminus, the 197-residue chain is Recombination protein RecR (197 aa).

The C4-type zinc-finger motif lies at 57 to 72; the sequence is CSICFAITEDDPCAIC. In terms of domain architecture, Toprim spans 79–174; sequence GTICVVENSQ…RISRLAHGIP (96 aa).

Belongs to the RecR family.

In terms of biological role, may play a role in DNA repair. It seems to be involved in an RecBC-independent recombinational process of DNA repair. It may act with RecF and RecO. In Pelobacter propionicus (strain DSM 2379 / NBRC 103807 / OttBd1), this protein is Recombination protein RecR.